A 186-amino-acid polypeptide reads, in one-letter code: Probable nicotinate-nucleotide adenylyltransferase (186 aa).

This sequence belongs to the NadD family.

The catalysed reaction is nicotinate beta-D-ribonucleotide + ATP + H(+) = deamido-NAD(+) + diphosphate. The protein operates within cofactor biosynthesis; NAD(+) biosynthesis; deamido-NAD(+) from nicotinate D-ribonucleotide: step 1/1. Its function is as follows. Catalyzes the reversible adenylation of nicotinate mononucleotide (NaMN) to nicotinic acid adenine dinucleotide (NaAD). The sequence is that of Probable nicotinate-nucleotide adenylyltransferase from Thermus thermophilus (strain ATCC BAA-163 / DSM 7039 / HB27).